The sequence spans 401 residues: MAKEKFDRSKPHLNIGTIGHVDHGKTTLTAAITTTLAKLVGGKNKAIAYDQIDNAPEEKARGITIATSHQEYETPNRHYAHVDCPGHADYVKNMITGAAQMDAAILVVSATDGAMPQTKEHILLARQVGVPYIVVYLNKADMLAADERDDMVEMVKEEIKDLLNKYNFPGDKTPFISGSALKALEGEDSDLGMKSILKLMEAVDTYVPNPTRIVDKPFLMPVEDVFSITGRGTVATGRVEQGVLKINDEIEIVGIRDTTKSVVTGIEMFRKLLDQAEAGDNIGALLRGTKKEDIERGQVLAKPGTITPHRKFKAEVYVLTKDEGGRHTPFFNNYRPQFYFRTTDITGVCNLPGGMEMVMPGDNVTMSIELIHPIAMDQGLKFAIREGGRTIGSGVVAEIVE.

The tr-type G domain maps to 10-211 (KPHLNIGTIG…AVDTYVPNPT (202 aa)). The tract at residues 19-26 (GHVDHGKT) is G1. Residue 19–26 (GHVDHGKT) coordinates GTP. Residue Thr-26 participates in Mg(2+) binding. A G2 region spans residues 62–66 (GITIA). Residues 83-86 (DCPG) form a G3 region. GTP-binding positions include 83 to 87 (DCPGH) and 138 to 141 (NKAD). Positions 138–141 (NKAD) are G4. The G5 stretch occupies residues 179–181 (SAL).

Belongs to the TRAFAC class translation factor GTPase superfamily. Classic translation factor GTPase family. EF-Tu/EF-1A subfamily. In terms of assembly, monomer.

The protein localises to the cytoplasm. The catalysed reaction is GTP + H2O = GDP + phosphate + H(+). Its function is as follows. GTP hydrolase that promotes the GTP-dependent binding of aminoacyl-tRNA to the A-site of ribosomes during protein biosynthesis. The sequence is that of Elongation factor Tu from Leptospira biflexa serovar Patoc (strain Patoc 1 / Ames).